An 88-amino-acid polypeptide reads, in one-letter code: Apolipoprotein C-I (88 aa).

The N-terminal stretch at methionine 1 to alanine 26 is a signal peptide.

The protein belongs to the apolipoprotein C1 family.

The protein localises to the secreted. Its function is as follows. Inhibitor of lipoprotein binding to the low density lipoprotein (LDL) receptor, LDL receptor-related protein, and very low density lipoprotein (VLDL) receptor. Associates with high density lipoproteins (HDL) and the triacylglycerol-rich lipoproteins in the plasma and makes up about 10% of the protein of the VLDL and 2% of that of HDL. Appears to interfere directly with fatty acid uptake and is also the major plasma inhibitor of cholesteryl ester transfer protein (CETP). Modulates the interaction of APOE with beta-migrating VLDL and inhibits binding of beta-VLDL to the LDL receptor-related protein. Binds free fatty acids and reduces their intracellular esterification. This is Apolipoprotein C-I (Apoc1) from Neotoma lepida (Desert woodrat).